A 67-amino-acid polypeptide reads, in one-letter code: MARITVEDCLEKIPNRFQLVLAATYRARMLSQGHAARIESKNKPAVTALREIAAGKVGLEMLKKVPN.

The protein belongs to the RNA polymerase subunit omega family. The RNAP catalytic core consists of 2 alpha, 1 beta, 1 beta' and 1 omega subunit. When a sigma factor is associated with the core the holoenzyme is formed, which can initiate transcription.

The enzyme catalyses RNA(n) + a ribonucleoside 5'-triphosphate = RNA(n+1) + diphosphate. In terms of biological role, promotes RNA polymerase assembly. Latches the N- and C-terminal regions of the beta' subunit thereby facilitating its interaction with the beta and alpha subunits. The chain is DNA-directed RNA polymerase subunit omega from Polaromonas naphthalenivorans (strain CJ2).